Here is a 759-residue protein sequence, read N- to C-terminus: MADEAPRKGSFSALVGRTNGLTKPAALAAAPAKPGGAGGSKKLVIKNFRDRPRLPDNYTQDTWRKLHEAVRAVQSSTSIRYNLEELYQAVENLCSHKVSPMLYKQLRQACEDHVQAQILPFREDSLDSVLFLKKINTCWQDHCRQMIMIRSIFLFLDRTYVLQNSTLPSIWDMGLELFRTHIISDKMVQSKTIDGILLLIERERSGEAVDRSLLRSLLGMLSDLQVYKDSFELKFLEETNCLYAAEGQRLMQEREVPEYLNHVSKRLEEEGDRVITYLDHSTQKPLIACVEKQLLGEHLTAILQKGLDHLLDENRVPDLAQMYQLFSRVRGGQQALLQHWSEYIKTFGTAIVINPEKDKDMVQDLLDFKDKVDHVIEVCFQKNERFVNLMKESFETFINKRPNKPAELIAKHVDSKLRAGNKEATDEELERTLDKIMILFRFIHGKDVFEAFYKKDLAKRLLVGKSASVDAEKSMLSKLKHECGAAFTSKLEGMFKDMELSKDIMVHFKQHMQNQSDSGPIDLTVNILTMGYWPTYTPMEVHLTPEMIKLQEVFKAFYLGKHSGRKLQWQTTLGHAVLKAEFKEGKKEFQVSLFQTLVLLMFNEGDGFSFEEIKMATGIEDSELRRTLQSLACGKARVLIKSPKGKEVEDGDKFIFNGEFKHKLFRIKINQIQMKETVEEQVSTTERVFQDRQYQIDAAIVRIMKMRKTLGHNLLVSELYNQLKFPVKPGDLKKRIESLIDRDYMERDKDNPNQYHYVA.

Residue Lys8 forms a Glycyl lysine isopeptide (Lys-Gly) (interchain with G-Cter in SUMO2) linkage. Position 10 is a phosphoserine (Ser10). Lys33 participates in a covalent cross-link: Glycyl lysine isopeptide (Lys-Gly) (interchain with G-Cter in ubiquitin). Residues 691-751 (DRQYQIDAAI…RDYMERDKDN (61 aa)) form the Cullin neddylation domain. Lys705 is covalently cross-linked (Glycyl lysine isopeptide (Lys-Gly) (interchain with G-Cter in NEDD8)).

It belongs to the cullin family. In terms of assembly, can self-associate. Component of multiple DCX (DDB1-CUL4-X-box) E3 ubiquitin-protein ligase complexes that seem to consist of DDB1, CUL4A or CUL4B, RBX1 and a variable substrate recognition component which seems to belong to a protein family described as DCAF (Ddb1- and Cul4-associated factor) or CDW (CUL4-DDB1-associated WD40-repeat) proteins. Component of the CSA complex (DCX(ERCC8) complex) containing ERCC8, RBX1, DDB1 and CUL4A; the CSA complex interacts with RNA polymerase II; upon UV irradiation it interacts with the COP9 signalosome and preferentially with the hyperphosphorylated form of RNA polymerase II. Component of the DCX(DET1-COP1) complex with the substrate recognition component DET1 and COP1. Component of the DCX(DDB2) complex with the substrate recognition component DDB2. Component of the DCX(DTL) complex with the putative substrate recognition component DTL. Component of DCX complexes part of the DesCEND (destruction via C-end degrons) pathway, which contain either TRPC4AP or DCAF12 as substrate-recognition component. Component of the DCX(AMBRA1) complex with the substrate recognition component AMBRA1. Interacts with DDB1, RBX1, RNF7, CDT1, TIP120A/CAND1, SKP2, CDKN1B, MDM2, TP53 and HOXA9. Interacts with DDB2; the interactions with DDB2 and CAND1 are mutually exclusive. Interacts with DCAF1, DTL, DDA1, DCAF6, DCAF4, DCAF16, DCAF17, DET1, WDTC1, DCAF5, DCAF11, WDR24A, COP1, PAFAH1B1, ERCC8, GRWD1, FBXW5, RBBP7, GNB2, WSB1, WSB2, NUP43, PWP1, FBXW8, ATG16L1, KATNB1, RBBP4, RBBP5, LRWD1 and DCAF8. May interact with WDR26, WDR51B, SNRNP40, WDR61, WDR76, WDR5. Interacts (when neddylated) with ARIH1; leading to activate the E3 ligase activity of ARIH1. The DDB1-CUL4A complex interacts with CRY1. Interacts (unneddylated form) with DCUN1D1, DCUN1D2, DCUN1D3, DCUN1D4 and DCUN1D5; these interactions promote the cullin neddylation. (Microbial infection) Interacts with Epstein-Barr virus BPLF1. In terms of processing, neddylated; required for activity of cullin-RING-based E3 ubiquitin-protein ligase complexes. Deneddylated via its interaction with the COP9 signalosome (CSN) complex. (Microbial infection) Deneddylated by Epstein-Barr virus BPLF1 leading to a S-phase-like environment that is required for efficient replication of the viral genome.

Its pathway is protein modification; protein ubiquitination. Functionally, core component of multiple cullin-RING-based E3 ubiquitin-protein ligase complexes which mediate the ubiquitination of target proteins. As a scaffold protein may contribute to catalysis through positioning of the substrate and the ubiquitin-conjugating enzyme. The E3 ubiquitin-protein ligase activity of the complex is dependent on the neddylation of the cullin subunit and is inhibited by the association of the deneddylated cullin subunit with TIP120A/CAND1. The functional specificity of the E3 ubiquitin-protein ligase complex depends on the variable substrate recognition component. DCX(DET1-COP1) directs ubiquitination of JUN. DCX(DDB2) directs ubiquitination of XPC. DCX(DDB2) ubiquitinates histones H3-H4 and is required for efficient histone deposition during replication-coupled (H3.1) and replication-independent (H3.3) nucleosome assembly, probably by facilitating the transfer of H3 from ASF1A/ASF1B to other chaperones involved in histone deposition. DCX(DTL) plays a role in PCNA-dependent polyubiquitination of CDT1 and MDM2-dependent ubiquitination of p53/TP53 in response to radiation-induced DNA damage and during DNA replication. DCX(DTL) directs autoubiquitination of DTL. In association with DDB1 and SKP2 probably is involved in ubiquitination of CDKN1B/p27kip. Is involved in ubiquitination of HOXA9. The DDB1-CUL4A-DTL E3 ligase complex regulates the circadian clock function by mediating the ubiquitination and degradation of CRY1. The DCX(ERCC8) complex (also named CSA complex) plays a role in transcription-coupled repair (TCR). A number of DCX complexes (containing either TRPC4AP or DCAF12 as substrate-recognition component) are part of the DesCEND (destruction via C-end degrons) pathway, which recognizes a C-degron located at the extreme C terminus of target proteins, leading to their ubiquitination and degradation. The DCX(AMBRA1) complex is a master regulator of the transition from G1 to S cell phase by mediating ubiquitination of phosphorylated cyclin-D (CCND1, CCND2 and CCND3). The DCX(AMBRA1) complex also acts as a regulator of Cul5-RING (CRL5) E3 ubiquitin-protein ligase complexes by mediating ubiquitination and degradation of Elongin-C (ELOC) component of CRL5 complexes. With CUL4B, contributes to ribosome biogenesis. The chain is Cullin-4A from Homo sapiens (Human).